The sequence spans 84 residues: MERTLRKKRNGRVVSDKMDKTVVVAVETKVRHPLYGKTINKTTKFKVHDEKNEAKINDRVLIMETRPLSKDKRWRLVEIVEKAK.

This sequence belongs to the universal ribosomal protein uS17 family. In terms of assembly, part of the 30S ribosomal subunit.

Functionally, one of the primary rRNA binding proteins, it binds specifically to the 5'-end of 16S ribosomal RNA. The polypeptide is Small ribosomal subunit protein uS17 (Clostridium botulinum (strain Eklund 17B / Type B)).